Consider the following 104-residue polypeptide: Large ribosomal subunit protein uL24 (104 aa).

Belongs to the universal ribosomal protein uL24 family. In terms of assembly, part of the 50S ribosomal subunit.

Its function is as follows. One of two assembly initiator proteins, it binds directly to the 5'-end of the 23S rRNA, where it nucleates assembly of the 50S subunit. In terms of biological role, one of the proteins that surrounds the polypeptide exit tunnel on the outside of the subunit. The protein is Large ribosomal subunit protein uL24 of Clostridium botulinum (strain Eklund 17B / Type B).